Reading from the N-terminus, the 317-residue chain is Mitochondrial outer membrane protein porin 4 (317 aa).

The disordered stretch occupies residues 1-30; the sequence is MEAETECKVPGVYSETGIPVEDPAPGLNSD.

It belongs to the eukaryotic mitochondrial porin (TC 1.B.8.1) family.

It localises to the mitochondrion outer membrane. Functionally, forms a channel through the mitochondrial outer membrane that allows diffusion of small hydrophilic molecules. The channel adopts an open conformation at low or zero membrane potential and a closed conformation at potentials above 30-40 mV. The open state has a weak anion selectivity whereas the closed state is cation-selective. In Oryza sativa subsp. japonica (Rice), this protein is Mitochondrial outer membrane protein porin 4 (VDAC4).